Consider the following 609-residue polypeptide: MHAYRTHTCGALRASDTGASVRVSGWIHRKRDHGGLVFIDLRDHYGLTQLVLHPETPGFDVVERLRAESVIKIDGEVVARDAAAVNPNLPTGEIEIRVSAVEVLSEAAELPLPVFGEPDYPEEIRLKHRYLDLRRETLHKNIVLRSRVIQSIRSRMFAQGFNEFQTPILTASSPEGARDFLVPSRLHPGKFYALPQAPQQFKQLLMVSGFDRYFQIAPCFRDEDLRADRSLEFYQLDVEMSFVTQEDVFAAIEPVMHGVFEEFSAGKPVSPIDGVHTFTNDFGATLEHRGFERLTYAQSMAWYGSDKPDLRNPIKMQDVSEHFRDGGFGLFAKILGADPKNRVWAIPAPTGGSRAFCDRMNSWAQGEGQPGLGYAFFSKDQNGWGGPIAKNLGEGFQPIADQLGLTHDDAVFFVAGDPAVFAKFAGLARTRVGTELKLVDEEQFKFCWIVDFPMFEWNEDEKKVDFSHNPFSMPQGGLEALETQDPLTIRAYQYDIVCNGYELCSGAIRNHKPEIMLKAFEVAGYGAEVVEEQFGGMLNAFRYGAPPHGGLAPGIDRIVMLLAEQVAIREVIAFPLNQQGQDLLMNAPAEAQDRQYKELYIRSAPPIKV.

Glu-175 is an L-aspartate binding site. The interval 199-202 (QQFK) is aspartate. Residues Arg-221 and His-468 each contribute to the L-aspartate site. An ATP-binding site is contributed by 221–223 (RDE). Glu-502 contacts ATP. Arg-509 contributes to the L-aspartate binding site. 554-557 (GIDR) serves as a coordination point for ATP.

This sequence belongs to the class-II aminoacyl-tRNA synthetase family. Type 1 subfamily. In terms of assembly, homodimer.

It is found in the cytoplasm. It carries out the reaction tRNA(Asx) + L-aspartate + ATP = L-aspartyl-tRNA(Asx) + AMP + diphosphate. Its function is as follows. Aspartyl-tRNA synthetase with relaxed tRNA specificity since it is able to aspartylate not only its cognate tRNA(Asp) but also tRNA(Asn). Reaction proceeds in two steps: L-aspartate is first activated by ATP to form Asp-AMP and then transferred to the acceptor end of tRNA(Asp/Asn). In Caulobacter sp. (strain K31), this protein is Aspartate--tRNA(Asp/Asn) ligase.